Reading from the N-terminus, the 306-residue chain is MELKDYYAIMGVKPTDDLKTIKTAYRRLARKYHPDVSKEPDAEAHFKEVAEAWEVLSDEQRRAEYDQMWQHRNDPQFNRQFHHSDGQSFNAEDFDDIFSSIFGQHARQSRQRPAARGHDIEIEVAVFLEETLTEHKRTISYNLPVYNAFGMIEQEIPKTLNVKIPAGVGNGQRIRLKGQGTPGENGGPNGDLWLVIHIAPHPLFDIVGQDLEIVVPVSPWEAALGAKVTVPTLKESILLTIPPGSQAGQRLRVKGKGLVSKKQTGDLYAVLKIVMPPKPDENTAALWQQLADAQSSFDPRKDWGKA.

The region spanning 5–69 is the J domain; it reads DYYAIMGVKP…QRRAEYDQMW (65 aa).

It localises to the cytoplasm. The protein localises to the nucleoid. In terms of biological role, DNA-binding protein that preferentially recognizes a curved DNA sequence. It is probably a functional analog of DnaJ; displays overlapping activities with DnaJ, but functions under different conditions, probably acting as a molecular chaperone in an adaptive response to environmental stresses other than heat shock. Lacks autonomous chaperone activity; binds native substrates and targets them for recognition by DnaK. Its activity is inhibited by the binding of CbpM. The chain is Curved DNA-binding protein from Shigella dysenteriae serotype 1 (strain Sd197).